Consider the following 936-residue polypeptide: Coiled-coil domain-containing protein 191 (936 aa).

2 coiled-coil regions span residues 189–270 (RLTM…VKAA) and 364–440 (RDYT…LQAA). A disordered region spans residues 495-541 (LGRTTTGNLQGSLQNVSLSAPGNKQHKTLGAEPSQQPGSNETLRTTS). 2 stretches are compositionally biased toward polar residues: residues 497-516 (RTTTGNLQGSLQNVSLSAPG) and 527-541 (PSQQPGSNETLRTTS). Residues 554-592 (NRHVFQQQLIEKQKKKLQEQQKTILELKKNLQLAEAQWA) are a coiled coil. 2 disordered regions span residues 607–656 (LSKP…TPHP) and 691–714 (KAQEEERQKREAEEKEAQLERKRE). The stretch at 662–739 (EERAIQRAEC…IKRNQQLEAI (78 aa)) forms a coiled coil.

This Homo sapiens (Human) protein is Coiled-coil domain-containing protein 191 (CCDC191).